The chain runs to 909 residues: Probable DNA-directed RNA polymerase subunit beta (909 aa).

Belongs to the RNA polymerase beta chain family.

It carries out the reaction RNA(n) + a ribonucleoside 5'-triphosphate = RNA(n+1) + diphosphate. Functionally, required for late and very late gene expression. May be a component of the novel RNA polymerase activity induced by baculovirus infection. This Lepidoptera (butterflies and moths) protein is Probable DNA-directed RNA polymerase subunit beta (LEF-8).